A 294-amino-acid polypeptide reads, in one-letter code: Ferredoxin--NADP reductase (294 aa).

Residues 13–137 (KNPYIGKCLS…TGPVGKEMLL (125 aa)) enclose the FAD-binding FR-type domain. Residues 72–75 (RLYS), 93–95 (CVR), Y99, 111–113 (VCS), and T152 each bind FAD. Residues S75 and R95 each coordinate NADP(+). Residues T152, 184-185 (IP), 214-215 (SR), K224, 224-228 (KMYIQ), 253-254 (GL), and E292 contribute to the NADP(+) site.

This sequence belongs to the ferredoxin--NADP reductase type 1 family. FAD serves as cofactor.

Its subcellular location is the cellular thylakoid membrane. It catalyses the reaction 2 reduced [2Fe-2S]-[ferredoxin] + NADP(+) + H(+) = 2 oxidized [2Fe-2S]-[ferredoxin] + NADPH. The sequence is that of Ferredoxin--NADP reductase (petH) from Spirulina sp.